Here is a 69-residue protein sequence, read N- to C-terminus: Amphipathic peptide OcyC2 (69 aa).

A signal peptide spans 1-23 (MKTQFAILMIAVVLMQMLVQTEG). An Isoleucine amide modification is found at isoleucine 37. The propeptide occupies 41-69 (GLKKLDQLDDTFDSDLSDADVKLLREMFK).

Belongs to the non-disulfide-bridged peptide (NDBP) superfamily. Short antimicrobial peptide (group 4) family. Expressed by the venom gland.

The protein resides in the secreted. The protein localises to the target cell membrane. In terms of biological role, amphipathic peptide with antimicrobial activity. Shows antifungal activity with MIC values ranging from 25 to 200 uM. Does not show antifungal activity against Candida glabrata (ATCC90030) and Candida parapsilosis (ATCC22019) (MIC&gt;400 uM). The protein is Amphipathic peptide OcyC2 of Opisthacanthus cayaporum (South American scorpion).